A 98-amino-acid polypeptide reads, in one-letter code: MTKSELVEIIAQKQPQLSIKDVELAVKTIIEYMSQSLSQGQRIEIRGFGSFSLHYRAPRVGRNPKTGETVHLPAKYVPHFKPGKELRDEVNASLKAGY.

This sequence belongs to the bacterial histone-like protein family. As to quaternary structure, heterodimer of an alpha and a beta chain.

Functionally, this protein is one of the two subunits of integration host factor, a specific DNA-binding protein that functions in genetic recombination as well as in transcriptional and translational control. This chain is Integration host factor subunit beta, found in Hahella chejuensis (strain KCTC 2396).